The primary structure comprises 95 residues: Aspartyl/glutamyl-tRNA(Asn/Gln) amidotransferase subunit C (95 aa).

This sequence belongs to the GatC family. As to quaternary structure, heterotrimer of A, B and C subunits.

It catalyses the reaction L-glutamyl-tRNA(Gln) + L-glutamine + ATP + H2O = L-glutaminyl-tRNA(Gln) + L-glutamate + ADP + phosphate + H(+). It carries out the reaction L-aspartyl-tRNA(Asn) + L-glutamine + ATP + H2O = L-asparaginyl-tRNA(Asn) + L-glutamate + ADP + phosphate + 2 H(+). Its function is as follows. Allows the formation of correctly charged Asn-tRNA(Asn) or Gln-tRNA(Gln) through the transamidation of misacylated Asp-tRNA(Asn) or Glu-tRNA(Gln) in organisms which lack either or both of asparaginyl-tRNA or glutaminyl-tRNA synthetases. The reaction takes place in the presence of glutamine and ATP through an activated phospho-Asp-tRNA(Asn) or phospho-Glu-tRNA(Gln). This Maricaulis maris (strain MCS10) (Caulobacter maris) protein is Aspartyl/glutamyl-tRNA(Asn/Gln) amidotransferase subunit C.